The chain runs to 816 residues: Larval serum protein 1 alpha chain (816 aa).

The N-terminal stretch at 1–16 (MKFAIAFLACVAVVTA) is a signal peptide.

It belongs to the hemocyanin family. In terms of assembly, heterohexamer, composed of three subunits, alpha, beta and gamma. As to expression, larval hemolymph.

Its subcellular location is the secreted. The protein resides in the extracellular space. Functionally, larval storage protein (LSP) which may serve as a store of amino acids for synthesis of adult proteins. This Drosophila melanogaster (Fruit fly) protein is Larval serum protein 1 alpha chain (Lsp1alpha).